A 138-amino-acid chain; its full sequence is Basic phospholipase A2 vurtoxin (138 aa).

The first 16 residues, 1–16 (MRTLWIVAVCLIGVEG), serve as a signal peptide directing secretion. Disulfide bonds link cysteine 42/cysteine 131, cysteine 44/cysteine 60, cysteine 59/cysteine 111, cysteine 65/cysteine 138, cysteine 66/cysteine 104, cysteine 73/cysteine 97, and cysteine 91/cysteine 102. Tyrosine 43, glycine 45, and glycine 47 together coordinate Ca(2+). Histidine 63 is a catalytic residue. Ca(2+) is bound at residue aspartate 64. Aspartate 105 is an active-site residue.

Ca(2+) serves as cofactor. Expressed by the venom gland.

It is found in the secreted. It catalyses the reaction a 1,2-diacyl-sn-glycero-3-phosphocholine + H2O = a 1-acyl-sn-glycero-3-phosphocholine + a fatty acid + H(+). Its function is as follows. Snake venom phospholipase A2 that may have a strong anticoagulant activity. Is able to suppress the acetylcholine (ACh)-evoked current mediated by alpha-7 (CHRNA7)-similar nAChRs in L.stagnalis neurons (IC(50)=10.5 uM) and to compete with alpha-bungarotoxin for binding to muscle- and alpha-7 neuronal nAChR types, as well as to AChBPs. In inhibition of alpha-bungarotoxin binding, this toxin is mostly active against T.californica nAChR (IC(50)=0.26 uM), it is moderately active against human alpha-7 nAChR (IC(50)=14 uM), and is not active against L.stagnalis and A.californica AChBP (IC(50)&gt;30 uM). This chain is Basic phospholipase A2 vurtoxin, found in Vipera renardi (Steppe viper).